We begin with the raw amino-acid sequence, 243 residues long: UPF0758 protein Ava_0172 (243 aa).

The MPN domain maps to 113–235 (PIDSPVAAVA…HQSLREVTTL (123 aa)). Zn(2+) is bound by residues H184, H186, and D197. The short motif at 184–197 (HNHPSGNVEPSPED) is the JAMM motif element.

Belongs to the UPF0758 family.

The sequence is that of UPF0758 protein Ava_0172 from Trichormus variabilis (strain ATCC 29413 / PCC 7937) (Anabaena variabilis).